Here is a 428-residue protein sequence, read N- to C-terminus: Dihydroorotase (428 aa).

Zn(2+)-binding residues include His-59 and His-61. Substrate-binding positions include 61-63 (HLR) and Asn-93. 3 residues coordinate Zn(2+): Asp-151, His-178, and His-231. Asn-277 contacts substrate. Asp-304 provides a ligand contact to Zn(2+). Asp-304 is a catalytic residue. Residues His-308 and 322–323 (FG) contribute to the substrate site.

This sequence belongs to the metallo-dependent hydrolases superfamily. DHOase family. Class I DHOase subfamily. Zn(2+) serves as cofactor.

The enzyme catalyses (S)-dihydroorotate + H2O = N-carbamoyl-L-aspartate + H(+). It participates in pyrimidine metabolism; UMP biosynthesis via de novo pathway; (S)-dihydroorotate from bicarbonate: step 3/3. In terms of biological role, catalyzes the reversible cyclization of carbamoyl aspartate to dihydroorotate. The protein is Dihydroorotase of Halalkalibacterium halodurans (strain ATCC BAA-125 / DSM 18197 / FERM 7344 / JCM 9153 / C-125) (Bacillus halodurans).